The primary structure comprises 357 residues: Glutamine synthetase cytosolic isozyme 1-2 (357 aa).

The region spanning 19–99 (IIAEYIWVGG…VMCDCYTPQG (81 aa)) is the GS beta-grasp domain. The 252-residue stretch at 106 to 357 (KRHSAAKIFS…AETTLLWKQN (252 aa)) folds into the GS catalytic domain.

It belongs to the glutamine synthetase family. In terms of assembly, homooctamer. As to expression, expressed in roots and at lower levels in leaf blades and spikelets (rice flower).

Its subcellular location is the cytoplasm. It carries out the reaction L-glutamate + NH4(+) + ATP = L-glutamine + ADP + phosphate + H(+). High-affinity glutamine synthetase involved in ammonium assimilation. Plays an important role in the primary assimilation of ammonium taken up by roots. Plays a role in maintaining nitrogen metabolic balance during ammonium assimilation, thus controlling plant growth and development. Reassimilates ammonium generated during lignification within developing tillers, which is probably required for the outgrowth of axillary buds. Required for nitrogen-dependent biosynthesis of cytokinin. Active cytokinin in axillary bud meristem is required for axillary bud outgrowth and necessary for tillering. This is Glutamine synthetase cytosolic isozyme 1-2 from Oryza sativa subsp. japonica (Rice).